A 122-amino-acid polypeptide reads, in one-letter code: Acidic phospholipase A2 5 (122 aa).

Intrachain disulfides connect C26–C115, C28–C44, C43–C95, C49–C122, C50–C88, C57–C81, and C75–C86. Ca(2+)-binding residues include F27, G29, and G31. The active site involves H47. A Ca(2+)-binding site is contributed by D48. D89 is a catalytic residue.

The protein belongs to the phospholipase A2 family. Group II subfamily. D49 sub-subfamily. Monomer (predominant). Non-covalently linked homodimers are also observed. The cofactor is Ca(2+). As to expression, expressed by the venom gland.

It is found in the secreted. It carries out the reaction a 1,2-diacyl-sn-glycero-3-phosphocholine + H2O = a 1-acyl-sn-glycero-3-phosphocholine + a fatty acid + H(+). With respect to regulation, preincubation with heparin slightly increase the enzymatic activity. In terms of biological role, snake venom phospholipase A2 (PLA2) that inhibits platelet aggregation induced by ADP, arachidonic acid and PAF. Acts in a enzymatic independent manner on a proteinase-activated receptor (PAR1, F2R) to evoke calcium release through the inositol 1,4,5-trisphosphate receptor (ITPR1, IP3R) and induces mouse aorta contraction. PAR1, phospholipase C and IP3R inhibitors suppress PA2-induced aorta contraction. PLA2 catalyzes the calcium-dependent hydrolysis of the 2-acyl groups in 3-sn-phosphoglycerides. The chain is Acidic phospholipase A2 5 from Trimeresurus stejnegeri (Chinese green tree viper).